Reading from the N-terminus, the 318-residue chain is Protoheme IX farnesyltransferase (318 aa).

9 helical membrane-spanning segments follow: residues 27–47 (IMML…GMTG), 52–72 (PAMA…AGAI), 103–123 (LTMG…ASNW), 124–144 (LAAA…TMWL), 152–172 (IVIG…AVTG), 179–199 (WILF…LSLL), 225–245 (ILVY…TGLG), 248–268 (IYGA…VAIL), and 288–308 (AFLF…VEHA).

Belongs to the UbiA prenyltransferase family. Protoheme IX farnesyltransferase subfamily. Interacts with CtaA.

It localises to the cell inner membrane. The enzyme catalyses heme b + (2E,6E)-farnesyl diphosphate + H2O = Fe(II)-heme o + diphosphate. It functions in the pathway porphyrin-containing compound metabolism; heme O biosynthesis; heme O from protoheme: step 1/1. Its function is as follows. Converts heme B (protoheme IX) to heme O by substitution of the vinyl group on carbon 2 of heme B porphyrin ring with a hydroxyethyl farnesyl side group. The chain is Protoheme IX farnesyltransferase from Hyphomonas neptunium (strain ATCC 15444).